Reading from the N-terminus, the 471-residue chain is Putative multidrug resistance protein MdtD (471 aa).

A run of 13 helical transmembrane segments spans residues 12 to 32 (LWIVAFGFFMQSLDTTIVNTA), 49 to 69 (MIIVSYVLTVAVMLPASGWLA), 77 to 97 (IFFTAIVLFTAGSLFCAQAST), 102 to 124 (VMARVLQGVGGAMMVPVGRLTVM), 138 to 158 (FVTLPGQVGPLLGPALGGVLV), 165 to 185 (WIFLINIPVGIVGAIATLCLM), 195 to 215 (FDLSGFLLLAAGMATLTLALD), 220 to 240 (LGISPAWLAGLVAVGLCALLL), 263 to 283 (FSLGLGGSFAGRIGSGMLPFM), 286 to 306 (VFLQIGLGFSPFHAGLMMIPM), 329 to 351 (VLVASTLGLAAVSLLFMFSALAG), 393 to 413 (LLSMVMQLSMSIGVTIAGLLL), and 431 to 451 (VFLYTYLSMAAIIALPALIFS).

It belongs to the major facilitator superfamily. TCR/Tet family.

Its subcellular location is the cell inner membrane. This is Putative multidrug resistance protein MdtD from Klebsiella pneumoniae subsp. pneumoniae (strain ATCC 700721 / MGH 78578).